A 439-amino-acid polypeptide reads, in one-letter code: Methylenetetrahydrofolate--tRNA-(uracil-5-)-methyltransferase TrmFO (439 aa).

7-12 (GAGLAG) provides a ligand contact to FAD.

The protein belongs to the MnmG family. TrmFO subfamily. It depends on FAD as a cofactor.

Its subcellular location is the cytoplasm. The catalysed reaction is uridine(54) in tRNA + (6R)-5,10-methylene-5,6,7,8-tetrahydrofolate + NADH + H(+) = 5-methyluridine(54) in tRNA + (6S)-5,6,7,8-tetrahydrofolate + NAD(+). It catalyses the reaction uridine(54) in tRNA + (6R)-5,10-methylene-5,6,7,8-tetrahydrofolate + NADPH + H(+) = 5-methyluridine(54) in tRNA + (6S)-5,6,7,8-tetrahydrofolate + NADP(+). Catalyzes the folate-dependent formation of 5-methyl-uridine at position 54 (M-5-U54) in all tRNAs. The sequence is that of Methylenetetrahydrofolate--tRNA-(uracil-5-)-methyltransferase TrmFO from Heliobacterium modesticaldum (strain ATCC 51547 / Ice1).